Consider the following 243-residue polypeptide: Probable phosphatase CLI_3563 (243 aa).

The Zn(2+) site is built by His8, His10, His16, His41, Glu74, His102, His132, Asp192, and His194.

It belongs to the PHP family. Requires Zn(2+) as cofactor.

The protein is Probable phosphatase CLI_3563 of Clostridium botulinum (strain Langeland / NCTC 10281 / Type F).